The primary structure comprises 208 residues: Effector protein MavE (208 aa).

Positions 77–80 match the NPxY eukaryotic motif motif; it reads NPRY. The helical transmembrane segment at 184–204 threads the bilayer; sequence VLFPFVAATVAVAATAASVLF.

As to quaternary structure, homotrimer.

The protein resides in the secreted. It is found in the host vacuole. It localises to the host pathogen-containing vacuole. The protein localises to the host pathogen-containing vacuole membrane. Virulence effector that is indispensable for endoplasmic reticulum (ER)-mediated remodeling of the Legionella pneumophila-containing vacuole (LCV) and lysosomal evasion. Essential for intracellular replication in human monocyte-derived macrophages (hMDMs) and amoebae, as well as for intrapulmonary proliferation in mice. The polypeptide is Effector protein MavE (Legionella pneumophila subsp. pneumophila (strain Philadelphia 1 / ATCC 33152 / DSM 7513)).